Reading from the N-terminus, the 223-residue chain is UPF0441 protein YgiB (223 aa).

The segment covering 178–195 (TVPKTAMAPKPATTTTVT) has biased composition (low complexity). The tract at residues 178–223 (TVPKTAMAPKPATTTTVTRGGFGESVAKQSTMQRGATGTSSRSMGG) is disordered. The span at 204–223 (AKQSTMQRGATGTSSRSMGG) shows a compositional bias: polar residues.

This sequence belongs to the UPF0441 family.

In Escherichia coli O6:K15:H31 (strain 536 / UPEC), this protein is UPF0441 protein YgiB.